The chain runs to 107 residues: SH3 domain-binding glutamic acid-rich-like protein 2 (107 aa).

Positions 61–67 match the SH3-binding motif; it reads QGNPLPP.

This sequence belongs to the SH3BGR family. As to expression, highly expressed in brain, placenta, liver and kidney. Expressed in retina.

Its subcellular location is the nucleus. This chain is SH3 domain-binding glutamic acid-rich-like protein 2 (SH3BGRL2), found in Homo sapiens (Human).